Consider the following 619-residue polypeptide: ESX-2 secretion system protein EccA2 (619 aa).

Residue 373-380 coordinates ATP; that stretch reads GPPGTGKT.

Belongs to the CbxX/CfxQ family. Part of the ESX-2 / type VII secretion system (T7SS), which is composed of cytosolic and membrane components. Residues 522-619 interact with an artificial EsxB-EsxA heterodimer from the adjacent ESX-1 locus.

The protein localises to the cytoplasm. Functionally, shows ATPase activity. Could provide energy for export of ESX-2 substrates. This is ESX-2 secretion system protein EccA2 (eccA2) from Mycobacterium tuberculosis (strain ATCC 25618 / H37Rv).